The primary structure comprises 1237 residues: Glutamate receptor ionotropic, NMDA 2C (1237 aa).

An N-terminal signal peptide occupies residues 1-19 (MGGALGPALLLTSLLGAWA). Residues 20 to 554 (RLGAGQGEQA…SAFLEPYSPA (535 aa)) lie on the Extracellular side of the membrane. N-linked (GlcNAc...) asparagine glycosylation is found at Asn70 and Asn73. The cysteines at positions 82 and 317 are disulfide-linked. N-linked (GlcNAc...) asparagine glycosylation is found at Asn337 and Asn438. Cystine bridges form between Cys426–Cys453 and Cys433–Cys454. Positions 509, 511, and 516 each coordinate L-glutamate. Asn539 carries N-linked (GlcNAc...) asparagine glycosylation. Residues 555–575 (VWVMMFVMCLTVVAITVFMFE) form a helical membrane-spanning segment. Over 576–601 (YFSPVSYNQNLTKGKKPGGPSFTIGK) the chain is Cytoplasmic. The tract at residues 601–620 (KSVWLLWALVFNNSVPIENP) is pore-forming. Residues 602–611 (SVWLLWALVF) constitute an intramembrane region (discontinuously helical). Residues 612-622 (NNSVPIENPRG) lie on the Cytoplasmic side of the membrane. A helical membrane pass occupies residues 623–644 (TTSKIMVLVWAFFAVIFLASYT). Residues 645-813 (ANLAAFMIQE…EVMSSKLDID (169 aa)) lie on the Extracellular side of the membrane. Asn685 carries N-linked (GlcNAc...) asparagine glycosylation. The L-glutamate site is built by Ser687, Thr688, and Asp729. Residues Cys743 and Cys798 are joined by a disulfide bond. The chain crosses the membrane as a helical span at residues 814–833 (NMAGVFYMLLVAMGLALLVF). Topologically, residues 834-1237 (AWEHLVYWKL…RRVSSLESEV (404 aa)) are cytoplasmic. Phosphoserine is present on residues Ser875, Ser881, and Ser912. Residues 907-925 (ADVSSSLDRATRTIENWGN) show a composition bias toward polar residues. Residues 907–990 (ADVSSSLDRA…LPDVSRPSCR (84 aa)) are disordered. A compositionally biased stretch (low complexity) spans 930–941 (PAPTASGPRSST). Over residues 968-982 (PQPPARPATCGPPLP) the composition is skewed to pro residues. Residues 1235–1237 (SEV) carry the PDZ-binding motif.

The protein belongs to the glutamate-gated ion channel (TC 1.A.10.1) family. NR2C/GRIN2C subfamily. Heterotetramer. Forms heterotetrameric channels composed of two GluN1/zeta subunits (GRIN1), and two identical GluN2/epsilon subunits (GRIN2A, GRIN2B, GRIN2C or GRIN2D) or GluN3 subunits (GRIN3A or GRIN3B) (in vitro). In vivo, the subunit composition may depend on the expression levels of the different subunits. Interacts with PDZ domains of PATJ and DLG4. Interacts (via PDZ-binding motif) with SNX27 (via PDZ domain); the interaction is required for recycling to the plasma membrane when endocytosed and prevent degradation in lysosomes. Detected in cerebellum.

It is found in the cell membrane. Its subcellular location is the postsynaptic cell membrane. It carries out the reaction Ca(2+)(in) = Ca(2+)(out). The catalysed reaction is Na(+)(in) = Na(+)(out). It catalyses the reaction K(+)(in) = K(+)(out). In terms of biological role, component of N-methyl-D-aspartate (NMDA) receptors (NMDARs) that function as heterotetrameric, ligand-gated cation channels with high calcium permeability and voltage-dependent block by Mg(2+). Participates in synaptic plasticity for learning and memory formation by contributing to the slow phase of excitatory postsynaptic current and long-term synaptic potentiation. Channel activation requires binding of the neurotransmitter L-glutamate to the GluN2 subunit, glycine or D-serine binding to the GluN1 subunit, plus membrane depolarization to eliminate channel inhibition by Mg(2+). NMDARs mediate simultaneously the potasium efflux and the influx of calcium and sodium. Each GluN2 subunit confers differential attributes to channel properties, including activation, deactivation and desensitization kinetics, pH sensitivity, Ca2(+) permeability, and binding to allosteric modulators. In Rattus norvegicus (Rat), this protein is Glutamate receptor ionotropic, NMDA 2C.